The sequence spans 409 residues: Multifunctional CCA protein (409 aa).

Gly8 and Arg11 together coordinate ATP. Residues Gly8 and Arg11 each coordinate CTP. Mg(2+) contacts are provided by Asp21 and Asp23. Residues Arg91, Arg137, and Arg140 each contribute to the ATP site. Positions 91, 137, and 140 each coordinate CTP. An HD domain is found at 228-329 (TGVHVLSVLE…LELLQSFDVY (102 aa)).

This sequence belongs to the tRNA nucleotidyltransferase/poly(A) polymerase family. Bacterial CCA-adding enzyme type 1 subfamily. Monomer. Can also form homodimers and oligomers. Requires Mg(2+) as cofactor. Ni(2+) serves as cofactor.

It catalyses the reaction a tRNA precursor + 2 CTP + ATP = a tRNA with a 3' CCA end + 3 diphosphate. It carries out the reaction a tRNA with a 3' CCA end + 2 CTP + ATP = a tRNA with a 3' CCACCA end + 3 diphosphate. Catalyzes the addition and repair of the essential 3'-terminal CCA sequence in tRNAs without using a nucleic acid template. Adds these three nucleotides in the order of C, C, and A to the tRNA nucleotide-73, using CTP and ATP as substrates and producing inorganic pyrophosphate. tRNA 3'-terminal CCA addition is required both for tRNA processing and repair. Also involved in tRNA surveillance by mediating tandem CCA addition to generate a CCACCA at the 3' terminus of unstable tRNAs. While stable tRNAs receive only 3'-terminal CCA, unstable tRNAs are marked with CCACCA and rapidly degraded. This chain is Multifunctional CCA protein, found in Pseudomonas savastanoi pv. phaseolicola (strain 1448A / Race 6) (Pseudomonas syringae pv. phaseolicola (strain 1448A / Race 6)).